A 363-amino-acid polypeptide reads, in one-letter code: MIVESVELKDFRNYEFLDMNFNEHVNIIYGDNAQGKTNILESIYMCSTSKSHRGSKDREIVRFGEDESHIKLNVLKHGMKYRIDMHLKKNKTKGIAVNGIPIKKAVELFGIINIVFFSPEDLNIIKNGPSERRRFMDMELSQLDKIYLSNLVNYNKVLNQRNKLLKDIAFSPSEQLMQTLDIWDMQLVKYGSLIIKGRKSFIEKINTIISDIHSRLTGGIENIKVCYVPDVDVNDFEEEVRNSRQKDIKYKVTGKGPHKDDLIFLINDNDVRKYGSQGQQRTAALSLKLSEIELVKLVIKDTPVLLLDDVLSELDSNRQNFLINSIGDIQTIVTCTGLEEFINNRMNINKIFKVTDGHVVNEN.

30 to 37 (GDNAQGKT) contributes to the ATP binding site.

It belongs to the RecF family.

It localises to the cytoplasm. Functionally, the RecF protein is involved in DNA metabolism; it is required for DNA replication and normal SOS inducibility. RecF binds preferentially to single-stranded, linear DNA. It also seems to bind ATP. The chain is DNA replication and repair protein RecF from Lachnospira eligens (strain ATCC 27750 / DSM 3376 / VPI C15-48 / C15-B4) (Eubacterium eligens).